Consider the following 164-residue polypeptide: Leucine-rich single-pass membrane protein 2 (164 aa).

Residues 97–117 traverse the membrane as a helical segment; the sequence is GFLLLLALLVLTCLVLALLAV.

Its subcellular location is the membrane. The sequence is that of Leucine-rich single-pass membrane protein 2 (LSMEM2) from Homo sapiens (Human).